A 207-amino-acid chain; its full sequence is Guanylate kinase (207 aa).

The region spanning 5–184 (GNLFIVSAPS…ALADLKSIIF (180 aa)) is the Guanylate kinase-like domain. Position 12 to 19 (12 to 19 (APSGAGKS)) interacts with ATP.

This sequence belongs to the guanylate kinase family.

It localises to the cytoplasm. The enzyme catalyses GMP + ATP = GDP + ADP. In terms of biological role, essential for recycling GMP and indirectly, cGMP. In Shewanella denitrificans (strain OS217 / ATCC BAA-1090 / DSM 15013), this protein is Guanylate kinase.